The primary structure comprises 228 residues: Ras-related protein Rab-32D (228 aa).

Position 16 to 23 (16 to 23 (GDVNVGKT)) interacts with GTP. Positions 38–46 (YKSTIGADF) match the Effector region motif. GTP contacts are provided by residues 64-68 (DTAGQ) and 128-131 (NKSD). The interval 183–228 (SDNEQFNDSPDEETSSITLLGTSKKHDNTNPNKPSTSSPSSCFNCK) is disordered. The span at 185-196 (NEQFNDSPDEET) shows a compositional bias: acidic residues. The span at 211-228 (TNPNKPSTSSPSSCFNCK) shows a compositional bias: low complexity. Cysteine 224 is lipidated: S-geranylgeranyl cysteine.

This sequence belongs to the small GTPase superfamily. Rab family.

The chain is Ras-related protein Rab-32D (rab32D) from Dictyostelium discoideum (Social amoeba).